We begin with the raw amino-acid sequence, 513 residues long: ATP synthase subunit alpha (513 aa).

ATP is bound at residue 169–176 (GDRQTGKT).

Belongs to the ATPase alpha/beta chains family. As to quaternary structure, F-type ATPases have 2 components, CF(1) - the catalytic core - and CF(0) - the membrane proton channel. CF(1) has five subunits: alpha(3), beta(3), gamma(1), delta(1), epsilon(1). CF(0) has three main subunits: a(1), b(2) and c(9-12). The alpha and beta chains form an alternating ring which encloses part of the gamma chain. CF(1) is attached to CF(0) by a central stalk formed by the gamma and epsilon chains, while a peripheral stalk is formed by the delta and b chains.

The protein localises to the cell inner membrane. The catalysed reaction is ATP + H2O + 4 H(+)(in) = ADP + phosphate + 5 H(+)(out). Functionally, produces ATP from ADP in the presence of a proton gradient across the membrane. The alpha chain is a regulatory subunit. This chain is ATP synthase subunit alpha, found in Vesicomyosocius okutanii subsp. Calyptogena okutanii (strain HA).